A 192-amino-acid chain; its full sequence is Molybdenum cofactor guanylyltransferase (192 aa).

GTP contacts are provided by residues 10-12 (LAG), Lys23, Asn51, Asp69, and Asp99. Position 99 (Asp99) interacts with Mg(2+).

This sequence belongs to the MobA family. In terms of assembly, monomer. Mg(2+) serves as cofactor.

Its subcellular location is the cytoplasm. The enzyme catalyses Mo-molybdopterin + GTP + H(+) = Mo-molybdopterin guanine dinucleotide + diphosphate. Transfers a GMP moiety from GTP to Mo-molybdopterin (Mo-MPT) cofactor (Moco or molybdenum cofactor) to form Mo-molybdopterin guanine dinucleotide (Mo-MGD) cofactor. In Haemophilus influenzae (strain 86-028NP), this protein is Molybdenum cofactor guanylyltransferase.